We begin with the raw amino-acid sequence, 1322 residues long: Phosphoribosylformylglycinamidine synthase (1322 aa).

Residues 307–318 (GASTGSGGEIRD) and Ala-678 each bind ATP. Residues Glu-718, Asn-722, and Asp-886 each coordinate Mg(2+). Residues 1069 to 1322 (MAILREQGVN…MFRNARVNLG (254 aa)) form the Glutamine amidotransferase type-1 domain. The Nucleophile role is filled by Cys-1162. Residues His-1287 and Glu-1289 contribute to the active site.

This sequence in the N-terminal section; belongs to the FGAMS family. In terms of assembly, monomer.

The protein resides in the cytoplasm. It carries out the reaction N(2)-formyl-N(1)-(5-phospho-beta-D-ribosyl)glycinamide + L-glutamine + ATP + H2O = 2-formamido-N(1)-(5-O-phospho-beta-D-ribosyl)acetamidine + L-glutamate + ADP + phosphate + H(+). The protein operates within purine metabolism; IMP biosynthesis via de novo pathway; 5-amino-1-(5-phospho-D-ribosyl)imidazole from N(2)-formyl-N(1)-(5-phospho-D-ribosyl)glycinamide: step 1/2. Phosphoribosylformylglycinamidine synthase involved in the purines biosynthetic pathway. Catalyzes the ATP-dependent conversion of formylglycinamide ribonucleotide (FGAR) and glutamine to yield formylglycinamidine ribonucleotide (FGAM) and glutamate. This is Phosphoribosylformylglycinamidine synthase from Photobacterium profundum (strain SS9).